A 388-amino-acid chain; its full sequence is Serpin B11 (388 aa).

An RCL region spans residues 338–362 (EEGTEAAAATGESISVKRLPVTVQF).

This sequence belongs to the serpin family. Ov-serpin subfamily. Expressed in eye, lung, lymphocytes, thymus, stomach, uterus, heart, brain, liver, skeletal muscle, and in day 7, 15, and 17 embryos.

The protein resides in the cytoplasm. Inhibitor of serine proteases. Has moderate inhibitory activity for trypsin-like peptidases, but also some activity with cysteine peptidases, cathepsin L, K, and V, and the serine peptidase, tryptase gamma. The protein is Serpin B11 (Serpinb11) of Mus musculus (Mouse).